A 1491-amino-acid chain; its full sequence is Neurexin-1a (1491 aa).

Residues 1 to 27 form the signal peptide; sequence MSFSMRNGAHLIWIGLLVCCLVDMGAS. The Laminin G-like 1 domain maps to 28 to 208; it reads MEFTGAEGQW…SDICEADHIC (181 aa). Residues 28–1415 lie on the Extracellular side of the membrane; that stretch reads MEFTGAEGQW…EVIRESSSTT (1388 aa). Residues 198–236 enclose the EGF-like 1 domain; that stretch reads NSDICEADHICLNGGVCSIVNDEPICDCSETGFQGKDCS. 3 disulfide bridges follow: Cys202–Cys214, Cys208–Cys223, and Cys225–Cys235. 2 Laminin G-like domains span residues 263–460 and 467–661; these read MATF…AFKC and DPVT…KPSC. Residues Asp309, Leu326, and Met394 each coordinate Ca(2+). 5 disulfides stabilise this stretch: Cys424/Cys460, Cys632/Cys661, Cys669/Cys680, Cys674/Cys689, and Cys691/Cys701. Residues 665–702 enclose the EGF-like 2 domain; that stretch reads PPKQCLSNPCLNSGTCREGWNRYVCDCSGTGYLGRSCE. Laminin G-like domains follow at residues 707–880 and 894–1069; these read ILSY…IDYC and DPVT…ERGC. 4 disulfides stabilise this stretch: Cys1041/Cys1069, Cys1076/Cys1087, Cys1081/Cys1096, and Cys1098/Cys1108. The EGF-like 3 domain occupies 1072–1109; the sequence is PSTTCQEDSCSNQGVCLQQWEGFSCDCSMTSYGGPLCN. The Laminin G-like 6 domain occupies 1113-1314; the sequence is TTYIFGRDGG…DPNVRVEGSA (202 aa). Positions 1318-1408 are disordered; the sequence is GDMPSSSITP…AKGYPSPEVI (91 aa). Positions 1322 to 1353 are enriched in low complexity; the sequence is SSSITPQSSVSAAGNRSETSPSITDITTTTAS. A compositionally biased stretch (polar residues) spans 1354-1364; it reads NRQGKQTTTPQ. The helical transmembrane segment at 1416–1436 threads the bilayer; it reads GMVVGIVAAAALCILILLYAM. Over 1437–1491 the chain is Cytoplasmic; it reads YKYRNRDEGSYHVDESRNYISNSATQPNGAAVKEKPIGVPKNKKDKKNKDKEYYV. Residues 1457 to 1491 are disordered; it reads SNSATQPNGAAVKEKPIGVPKNKKDKKNKDKEYYV.

The protein belongs to the neurexin family.

Its subcellular location is the membrane. Its function is as follows. Neuronal cell surface protein that may be involved in cell recognition and cell adhesion. This chain is Neurexin-1a (nrxn1a), found in Danio rerio (Zebrafish).